A 227-amino-acid chain; its full sequence is NADH-quinone oxidoreductase subunit C (227 aa).

It belongs to the complex I 30 kDa subunit family. NDH-1 is composed of 14 different subunits. Subunits NuoB, C, D, E, F, and G constitute the peripheral sector of the complex.

The protein resides in the cell inner membrane. The catalysed reaction is a quinone + NADH + 5 H(+)(in) = a quinol + NAD(+) + 4 H(+)(out). Its function is as follows. NDH-1 shuttles electrons from NADH, via FMN and iron-sulfur (Fe-S) centers, to quinones in the respiratory chain. The immediate electron acceptor for the enzyme in this species is believed to be ubiquinone. Couples the redox reaction to proton translocation (for every two electrons transferred, four hydrogen ions are translocated across the cytoplasmic membrane), and thus conserves the redox energy in a proton gradient. This is NADH-quinone oxidoreductase subunit C from Coxiella burnetii (strain Dugway 5J108-111).